We begin with the raw amino-acid sequence, 399 residues long: Tryptophan synthase beta chain (399 aa).

At lysine 92 the chain carries N6-(pyridoxal phosphate)lysine.

It belongs to the TrpB family. Tetramer of two alpha and two beta chains. Pyridoxal 5'-phosphate is required as a cofactor.

It catalyses the reaction (1S,2R)-1-C-(indol-3-yl)glycerol 3-phosphate + L-serine = D-glyceraldehyde 3-phosphate + L-tryptophan + H2O. It functions in the pathway amino-acid biosynthesis; L-tryptophan biosynthesis; L-tryptophan from chorismate: step 5/5. Functionally, the beta subunit is responsible for the synthesis of L-tryptophan from indole and L-serine. The polypeptide is Tryptophan synthase beta chain (Legionella pneumophila (strain Corby)).